Here is a 213-residue protein sequence, read N- to C-terminus: Putative 3-methyladenine DNA glycosylase (213 aa).

The protein belongs to the DNA glycosylase MPG family.

The protein is Putative 3-methyladenine DNA glycosylase of Latilactobacillus sakei subsp. sakei (strain 23K) (Lactobacillus sakei subsp. sakei).